A 397-amino-acid polypeptide reads, in one-letter code: tRNA(Ile)-lysidine synthase (397 aa).

44-49 (SGGADS) serves as a coordination point for ATP.

It belongs to the tRNA(Ile)-lysidine synthase family.

It localises to the cytoplasm. It carries out the reaction cytidine(34) in tRNA(Ile2) + L-lysine + ATP = lysidine(34) in tRNA(Ile2) + AMP + diphosphate + H(+). In terms of biological role, ligates lysine onto the cytidine present at position 34 of the AUA codon-specific tRNA(Ile) that contains the anticodon CAU, in an ATP-dependent manner. Cytidine is converted to lysidine, thus changing the amino acid specificity of the tRNA from methionine to isoleucine. The polypeptide is tRNA(Ile)-lysidine synthase (Rhodopirellula baltica (strain DSM 10527 / NCIMB 13988 / SH1)).